The sequence spans 389 residues: SH3 and F-BAR domain-containing protein DDB_G0274695 (389 aa).

An F-BAR domain is found at 3–258; sequence EQFKDNFWGP…VITQIDKLED (256 aa). A coiled-coil region spans residues 119–192; that stretch reads KLNKERKDME…QDYRDSVNKL (74 aa). The span at 300–328 shows a compositional bias: low complexity; that stretch reads LTSSVSSNSLTSSYNSATTTPTPAPRSTP. The tract at residues 300 to 329 is disordered; that stretch reads LTSSVSSNSLTSSYNSATTTPTPAPRSTPI. Residues 332-389 form the SH3 domain; it reads SKKKQAKALYDYVGSDATELDFFAGDIITILDEDESGWFRGELGDRIGLYPSNYCEPI.

This is SH3 and F-BAR domain-containing protein DDB_G0274695 from Dictyostelium discoideum (Social amoeba).